Here is a 126-residue protein sequence, read N- to C-terminus: Methylglyoxal synthase (126 aa).

Positions 1–126 (MADRKCLALI…AEQLIDFRRN (126 aa)) constitute an MGS-like domain. Residues His-12, Lys-16, 38-41 (TGTT), and 59-60 (SG) contribute to the substrate site. Residue Asp-65 is the Proton donor/acceptor of the active site. Substrate is bound at residue His-92.

Belongs to the methylglyoxal synthase family.

It carries out the reaction dihydroxyacetone phosphate = methylglyoxal + phosphate. Its function is as follows. Catalyzes the formation of methylglyoxal from dihydroxyacetone phosphate. The protein is Methylglyoxal synthase of Rhizobium meliloti (strain 1021) (Ensifer meliloti).